The following is a 473-amino-acid chain: Zinc transporter SLC39A7 (473 aa).

The chain crosses the membrane as a helical span at residues 11–31; that stretch reads VAVGLLTWAALGLLVAGHGGH. Composition is skewed to basic and acidic residues over residues 44–56 and 66–114; these read GHSHRHSHEDFHH and HTHE…EHSH. Positions 44-120 are disordered; the sequence is GHSHRHSHED…EHSHGGYGES (77 aa). The residue at position 66 (His-66) is a Pros-methylhistidine. Helical transmembrane passes span 138–158, 169–189, and 214–234; these read ALGATVLISAAPFFVLFLIPV, LQILLSFASGGLLGDAFLHLI, and GPILSVGLWVLSGIVAFLVVE. The disordered stretch occupies residues 243–316; that stretch reads GHEHSHGHGH…QHSGEEKAGS (74 aa). 2 positions are modified to phosphoserine: Ser-278 and Ser-279. The segment covering 298–316 has biased composition (basic and acidic residues); it reads RPKDGPVRPQHSGEEKAGS. Residues 388–408 form a helical membrane-spanning segment; it reads LLTAVGALAGTAFALLTEGGA. The interval 428-473 is disordered; that stretch reads GDQAATQASPRSTSLPPVGEEDFREDPGPRQKGQQEKSGINVNCVS. Residues 431-442 are compositionally biased toward polar residues; the sequence is AATQASPRSTSL. Residues 452–462 are compositionally biased toward basic and acidic residues; that stretch reads EDPGPRQKGQQ. The span at 463 to 473 shows a compositional bias: polar residues; sequence EKSGINVNCVS.

The protein belongs to the ZIP transporter (TC 2.A.5) family. KE4/Catsup subfamily. Homodimer. Post-translationally, methylation at some His residue by METTL9 leads to reduced zinc-binding. In terms of processing, rapidly phosphorylated by CK2 following Zn(2+) treatment. This phosphorylation is required for efficient cytosolic Zn(2+) release.

Its subcellular location is the endoplasmic reticulum membrane. The protein resides in the golgi apparatus. It is found in the cis-Golgi network membrane. It carries out the reaction Zn(2+)(in) = Zn(2+)(out). In terms of biological role, transports Zn(2+) from the endoplasmic reticulum (ER)/Golgi apparatus to the cytosol, playing an essential role in the regulation of cytosolic zinc levels. Acts as a gatekeeper of zinc release from intracellular stores, requiring post-translational activation by phosphorylation on residues, resulting in activation of multiple downstream pathways leading to cell growth and proliferation. Has an essential role in B cell development and is required for proper B cell receptor signaling. Plays an important role in maintaining intestinal epithelial homeostasis and skin dermis development by regulating ER function. Controls cell signaling pathways involved in glucose metabolism in skeletal muscle. Has a protective role against ER stress in different biological contexts. Mediates Zn(2+)-induced ferroptosis. The polypeptide is Zinc transporter SLC39A7 (SLC39A7) (Sus scrofa (Pig)).